The primary structure comprises 444 residues: Transcription activator AKTR-1 (444 aa).

The segment at residues 16–43 (CDFCTQSKLRCNKNKPSCRRCTIQQQPC) is a DNA-binding region (zn(2)-C6 fungal-type). A disordered region spans residues 49–87 (RRTGRPPKHPRKANDCQEANGQHGEQDPVTSTPGGSCQQ). A compositionally biased stretch (basic residues) spans 50-59 (RTGRPPKHPR). Polar residues predominate over residues 76–87 (PVTSTPGGSCQQ).

The protein resides in the nucleus. Functionally, transcription factor that regulates the expression of the gene clusters that mediate the biosynthesis of the host-selective toxins (HSTs) AK-toxins responsible for Japanese pear black spot disease by the Japanese pear pathotype. AK-toxins are esters of 9,10-epoxy 8-hydroxy 9-methyldecatrienoic acid (EDA). On cellular level, AK-toxins affect plasma membrane of susceptible cells and cause a sudden increase in loss of K(+) after a few minutes of toxin treatment. This Alternaria alternata (Alternaria rot fungus) protein is Transcription activator AKTR-1.